The chain runs to 129 residues: Fluoride-specific ion channel FluC (129 aa).

4 consecutive transmembrane segments (helical) span residues 5–25 (LTIALFCAGGGLARYYLSGWV), 32–52 (AFPFGTLAVNLIGAYCIGLIM), 60–80 (LIPATLRLGLTVGFMGGLTTF), and 99–119 (AMVNALASVVMCLLCTWLGVI). Residues glycine 75 and threonine 78 each contribute to the Na(+) site.

It belongs to the fluoride channel Fluc/FEX (TC 1.A.43) family.

It localises to the cell inner membrane. It catalyses the reaction fluoride(in) = fluoride(out). Na(+) is not transported, but it plays an essential structural role and its presence is essential for fluoride channel function. Functionally, fluoride-specific ion channel. Important for reducing fluoride concentration in the cell, thus reducing its toxicity. This Pelobacter propionicus (strain DSM 2379 / NBRC 103807 / OttBd1) protein is Fluoride-specific ion channel FluC.